A 79-amino-acid polypeptide reads, in one-letter code: Acyl carrier protein (79 aa).

In terms of domain architecture, Carrier spans 2–77; that stretch reads SDIADKVKKI…DAIDYIEKQK (76 aa). The residue at position 37 (S37) is an O-(pantetheine 4'-phosphoryl)serine.

Belongs to the acyl carrier protein (ACP) family. Post-translationally, 4'-phosphopantetheine is transferred from CoA to a specific serine of apo-ACP by AcpS. This modification is essential for activity because fatty acids are bound in thioester linkage to the sulfhydryl of the prosthetic group.

It is found in the cytoplasm. It functions in the pathway lipid metabolism; fatty acid biosynthesis. In terms of biological role, carrier of the growing fatty acid chain in fatty acid biosynthesis. This Gluconobacter oxydans (strain 621H) (Gluconobacter suboxydans) protein is Acyl carrier protein.